Consider the following 291-residue polypeptide: Elongation factor Ts (291 aa).

The interval threonine 80–valine 83 is involved in Mg(2+) ion dislocation from EF-Tu.

This sequence belongs to the EF-Ts family.

Its subcellular location is the cytoplasm. In terms of biological role, associates with the EF-Tu.GDP complex and induces the exchange of GDP to GTP. It remains bound to the aminoacyl-tRNA.EF-Tu.GTP complex up to the GTP hydrolysis stage on the ribosome. This is Elongation factor Ts from Limosilactobacillus reuteri (strain DSM 20016) (Lactobacillus reuteri).